A 444-amino-acid chain; its full sequence is C4-dicarboxylate transport protein (444 aa).

The next 9 membrane-spanning stretches (helical) occupy residues 17–37 (PFYT…ILLG), 57–77 (LVKM…IAGM), 92–112 (LYFL…ANVV), 139–159 (EQSI…GAFA), 161–181 (GDIL…AMVG), 201–221 (LVAI…AFTI), 234–254 (MLIG…LGAV), 320–340 (IYMT…LSWG), and 368–388 (AATL…ILGI).

The protein belongs to the dicarboxylate/amino acid:cation symporter (DAACS) (TC 2.A.23) family.

Its subcellular location is the cell inner membrane. Responsible for the transport of dicarboxylates such as succinate, fumarate, and malate from the periplasm across the membrane. The protein is C4-dicarboxylate transport protein of Rhizobium johnstonii (strain DSM 114642 / LMG 32736 / 3841) (Rhizobium leguminosarum bv. viciae).